The primary structure comprises 158 residues: NAD(P)H-quinone oxidoreductase subunit J, chloroplastic (158 aa).

This sequence belongs to the complex I 30 kDa subunit family. NDH is composed of at least 16 different subunits, 5 of which are encoded in the nucleus.

It is found in the plastid. The protein localises to the chloroplast thylakoid membrane. It carries out the reaction a plastoquinone + NADH + (n+1) H(+)(in) = a plastoquinol + NAD(+) + n H(+)(out). The enzyme catalyses a plastoquinone + NADPH + (n+1) H(+)(in) = a plastoquinol + NADP(+) + n H(+)(out). Its function is as follows. NDH shuttles electrons from NAD(P)H:plastoquinone, via FMN and iron-sulfur (Fe-S) centers, to quinones in the photosynthetic chain and possibly in a chloroplast respiratory chain. The immediate electron acceptor for the enzyme in this species is believed to be plastoquinone. Couples the redox reaction to proton translocation, and thus conserves the redox energy in a proton gradient. The sequence is that of NAD(P)H-quinone oxidoreductase subunit J, chloroplastic from Aethionema cordifolium (Lebanon stonecress).